We begin with the raw amino-acid sequence, 439 residues long: Nuclear hormone receptor family member nhr-97 (439 aa).

Polar residues predominate over residues 1–13; that stretch reads MSGDAQPSSNQRA. Residues 1 to 22 form a disordered region; it reads MSGDAQPSSNQRATEARPPPSP. Positions 32–108 form a DNA-binding region, nuclear receptor; that stretch reads GALCVVCGDR…VGMKIEAVKM (77 aa). NR C4-type zinc fingers lie at residues 35 to 56 and 72 to 96; these read CVVCGDRACSHLYYGVAACHGC and CRYGGNCSISTAGRNACRYCRFHRC. Positions 112–135 are disordered; sequence LTKRKKEKTDEDDTDDGGSHESFE. In terms of domain architecture, NR LBD spans 173–408; the sequence is FVQPSLQNLL…GEGLLFWQLY (236 aa).

Belongs to the nuclear hormone receptor family.

Its subcellular location is the nucleus. In terms of biological role, orphan nuclear receptor. In Caenorhabditis elegans, this protein is Nuclear hormone receptor family member nhr-97 (nhr-97).